Reading from the N-terminus, the 149-residue chain is L-alanine exporter AlaE (149 aa).

4 helical membrane-spanning segments follow: residues 16 to 36 (FAMV…LSGM), 46 to 66 (LVAI…RDLI), 85 to 105 (VLAY…TVGA), and 112 to 132 (AAVS…GYFL).

The protein belongs to the AlaE exporter family.

Its subcellular location is the cell inner membrane. Exports L-alanine. The chain is L-alanine exporter AlaE from Salmonella arizonae (strain ATCC BAA-731 / CDC346-86 / RSK2980).